A 211-amino-acid polypeptide reads, in one-letter code: Thymidylate kinase (211 aa).

11–18 is a binding site for ATP; the sequence is GPDGAGKT.

It belongs to the thymidylate kinase family.

The catalysed reaction is dTMP + ATP = dTDP + ADP. Phosphorylation of dTMP to form dTDP in both de novo and salvage pathways of dTTP synthesis. This Streptococcus pyogenes serotype M49 (strain NZ131) protein is Thymidylate kinase.